We begin with the raw amino-acid sequence, 105 residues long: Thioredoxin (105 aa).

Positions 2 to 105 constitute a Thioredoxin domain; it reads VKQIESKTAF…KLEATINELV (104 aa). The residue at position 3 (Lys3) is an N6-acetyllysine. Lys8 is modified (N6-succinyllysine). Active-site nucleophile residues include Cys32 and Cys35. A disulfide bond links Cys32 and Cys35. N6-acetyllysine is present on Lys39. S-nitrosocysteine is present on residues Cys62 and Cys69. The residue at position 73 (Cys73) is an S-nitrosocysteine; alternate. Lys94 carries the N6-acetyllysine; alternate modification. Residue Lys94 is modified to N6-succinyllysine; alternate.

This sequence belongs to the thioredoxin family. In terms of assembly, homodimer; disulfide-linked. Interacts with TXNIP through the redox-active site. Interacts with MAP3K5 and CASP3. In case of infection, interacts with S.typhimurium protein slrP. Interacts with APEX1; the interaction stimulates the FOS/JUN AP-1 DNA-binding activity in a redox-dependent manner. Post-translationally, in the fully reduced protein, both Cys-69 and Cys-73 are nitrosylated in response to nitric oxide (NO). When two disulfide bonds are present in the protein, only Cys-73 is nitrosylated. Cys-73 can serve as donor for nitrosylation of target proteins. In terms of processing, in case of infection, ubiquitinated by S.typhimurium protein slrP, leading to its degradation.

Its subcellular location is the nucleus. It is found in the cytoplasm. The protein resides in the secreted. Participates in various redox reactions through the reversible oxidation of its active center dithiol to a disulfide and catalyzes dithiol-disulfide exchange reactions. Plays a role in the reversible S-nitrosylation of cysteine residues in target proteins, and thereby contributes to the response to intracellular nitric oxide. Nitrosylates the active site Cys of CASP3 in response to nitric oxide (NO), and thereby inhibits caspase-3 activity. Induces the FOS/JUN AP-1 DNA-binding activity in ionizing radiation (IR) cells through its oxidation/reduction status and stimulates AP-1 transcriptional activity. Its function is as follows. ADF augments the expression of the interleukin-2 receptor TAC (IL2R/P55). In Homo sapiens (Human), this protein is Thioredoxin (TXN).